A 286-amino-acid chain; its full sequence is Beta-lactamase SHV-3 (286 aa).

The N-terminal stretch at 1-21 is a signal peptide; the sequence is MRYIRLCIISLLATLPLAVHA. Ser66 (acyl-ester intermediate) is an active-site residue. A disulfide bridge links Cys73 with Cys119. The active-site Proton acceptor is Glu164. A substrate-binding site is contributed by 230-232; it reads KTG.

It belongs to the class-A beta-lactamase family.

The catalysed reaction is a beta-lactam + H2O = a substituted beta-amino acid. This enzyme hydrolyzes cefotaxime, ceftazidime and other broad spectrum cephalosporins. In Klebsiella pneumoniae, this protein is Beta-lactamase SHV-3 (bla).